A 160-amino-acid chain; its full sequence is Protein max (160 aa).

The segment covering 1–13 (MSDNDDIEVESDE) has biased composition (acidic residues). Positions 1 to 40 (MSDNDDIEVESDEEQPRFQSAADKRAHHNALERKRRDHIK) are disordered. Residue S2 is modified to N-acetylserine. 2 positions are modified to phosphoserine: S2 and S11. Residues 23 to 74 (DKRAHHNALERKRRDHIKDSFHSLRDSVPSLQGEKASRAQILDKATEYIQYM) enclose the bHLH domain. Residues 29-40 (NALERKRRDHIK) are compositionally biased toward basic and acidic residues. K66 is subject to N6-acetyllysine. The segment at 81 to 102 (HQQDIDDLKRQNALLEQQVRAL) is leucine-zipper. A disordered region spans residues 104-160 (KARSSAQLQTNYPSSDNSLYTNAKGGTISAFDGGSDSSSESEPEEPQSRKKLRMEAS). S107 bears the Phosphoserine mark. Residues 107–124 (SSAQLQTNYPSSDNSLYT) are compositionally biased toward polar residues. K153 and K154 each carry N6-acetyllysine.

It belongs to the MAX family. Efficient DNA binding requires dimerization with another bHLH protein. Binds DNA as a heterodimer with MYC or MAD. Part of the E2F6.com-1 complex in G0 phase composed of E2F6, MGA, MAX, TFDP1, CBX3, BAT8, EUHMTASE1, RING1, RNF2, MBLR, L3MBTL2 and YAF2. Component of some MLL1/MLL complex, at least composed of the core components KMT2A/MLL1, ASH2L, HCFC1/HCF1, WDR5 and RBBP5, as well as the facultative components BACC1, CHD8, E2F6, HSP70, INO80C, KANSL1, LAS1L, MAX, MCRS1, MGA, MYST1/MOF, PELP1, PHF20, PRP31, RING2, RUVB1/TIP49A, RUVB2/TIP49B, SENP3, TAF1, TAF4, TAF6, TAF7, TAF9 and TEX10. Interacts with SPAG9. The heterodimer MYC:MAX interacts with ABI1; the interaction may enhance MYC:MAX transcriptional activity. In terms of processing, phosphorylated.

The protein localises to the nucleus. The protein resides in the cell projection. It localises to the dendrite. Transcription regulator. Forms a sequence-specific DNA-binding protein complex with MYC or MAD which recognizes the core sequence 5'-CAC[GA]TG-3'. The MYC:MAX complex is a transcriptional activator, whereas the MAD:MAX complex is a repressor. CpG methylation of the recognition site greatly inhibits DNA binding, suggesting that DNA methylation may regulate the MYC:MAX complex in vivo. May repress transcription via the recruitment of a chromatin remodeling complex containing H3 'Lys-9' histone methyltransferase activity. Represses MYC transcriptional activity from E-box elements. The sequence is that of Protein max from Mus musculus (Mouse).